The sequence spans 443 residues: Dihydroorotase (443 aa).

Zn(2+)-binding residues include histidine 80 and histidine 82. Substrate contacts are provided by residues 82-84 and asparagine 114; that span reads HFR. Zn(2+) contacts are provided by aspartate 170, histidine 197, and histidine 251. Asparagine 297 provides a ligand contact to substrate. Aspartate 324 contacts Zn(2+). Aspartate 324 is a catalytic residue. Substrate-binding positions include histidine 328 and 342–343; that span reads FG.

This sequence belongs to the metallo-dependent hydrolases superfamily. DHOase family. Class I DHOase subfamily. Zn(2+) is required as a cofactor.

It carries out the reaction (S)-dihydroorotate + H2O = N-carbamoyl-L-aspartate + H(+). It functions in the pathway pyrimidine metabolism; UMP biosynthesis via de novo pathway; (S)-dihydroorotate from bicarbonate: step 3/3. Its function is as follows. Catalyzes the reversible cyclization of carbamoyl aspartate to dihydroorotate. The protein is Dihydroorotase of Wolbachia sp. subsp. Brugia malayi (strain TRS).